The following is a 601-amino-acid chain: Putative pentatricopeptide repeat-containing protein At3g25060, mitochondrial (601 aa).

The N-terminal 80 residues, 1–80 (MVQTKHFCML…KVFDELPQRG (80 aa)), are a transit peptide targeting the mitochondrion. 13 PPR repeats span residues 49-79 (GSSI…LPQR), 80-114 (GVSV…KIQP), 115-149 (DSST…GYKN), 150-180 (DVFV…MAKR), 181-215 (DVIC…GFGR), 216-250 (DRVV…GLPM), 251-281 (NVVV…MMFK), 282-316 (TAVS…GFQP), 317-347 (DLVT…ILKR), 351-381 (DRVT…VGRK), 382-416 (DLVC…NIEP), 417-452 (DHAT…KIQP), and 453-487 (SEKH…NALP). A type E motif region spans residues 488-563 (IWVALLSGCI…VPGYSAIEVN (76 aa)). The segment at 564–594 (GELRTFLMEDLSHHEHYHMLQVLRNLKTEIR) is type E(+) motif.

It belongs to the PPR family. PCMP-E subfamily.

Its subcellular location is the mitochondrion. The protein is Putative pentatricopeptide repeat-containing protein At3g25060, mitochondrial (PCMP-E96) of Arabidopsis thaliana (Mouse-ear cress).